The sequence spans 952 residues: GATA zinc finger domain-containing protein 5 (952 aa).

Disordered regions lie at residues 1–36 (MDYQ…DSPS) and 138–197 (PTPL…SPKQ). Residues 10 to 24 (QISQEFPTDISTTKS) are compositionally biased toward polar residues. A compositionally biased stretch (pro residues) spans 148–157 (SPPPPPPPPA). Residues 158–196 (ATTTTTITTTTTTSAGNSTTKNNNNNNNNNNNNNGKSPK) show a composition bias toward low complexity. The GATA-type zinc finger occupies 241–266 (CYQCNTSNTPEWRKGPEGPATLCNAC). 4 disordered regions span residues 380–418 (MTPS…HEQP), 433–478 (LLSS…GGGG), 634–699 (QNNS…NKNN), and 732–816 (QQQE…LSVN). The span at 393–412 (KTTKTKPKPKSKSKPGKITH) shows a compositional bias: basic residues. A compositionally biased stretch (low complexity) spans 445 to 467 (SSSSSCGTSLNSSLGSSSGTITN). Residues 468-478 (SGGGSSGGGGG) are compositionally biased toward gly residues. Residues 634-653 (QNNSFSGPNDQNPYVPSVSL) are compositionally biased toward polar residues. Composition is skewed to low complexity over residues 654–668 (NSNK…NNNK), 678–699 (NNKN…NKNN), and 732–745 (QQQE…EQQQ). A compositionally biased stretch (polar residues) spans 746–762 (NLSINNSNQTNENEILG). The span at 763–814 (TTTTTTTSTATIITSQVPMNLSPNSDDNQSSSNYSTLSDSGSSPTDSFSGLS) shows a compositional bias: low complexity.

The polypeptide is GATA zinc finger domain-containing protein 5 (gtaE) (Dictyostelium discoideum (Social amoeba)).